The chain runs to 21 residues: Large ribosomal subunit protein uL10 (21 aa).

Belongs to the universal ribosomal protein uL10 family. In terms of assembly, part of the ribosomal stalk of the 50S ribosomal subunit. The N-terminus interacts with L11 and the large rRNA to form the base of the stalk. The C-terminus forms an elongated spine to which L12 dimers bind in a sequential fashion forming a multimeric L10(L12)X complex.

Forms part of the ribosomal stalk, playing a central role in the interaction of the ribosome with GTP-bound translation factors. This Bacillus cereus protein is Large ribosomal subunit protein uL10 (rplJ).